Reading from the N-terminus, the 1137-residue chain is Ribonucleoside-diphosphate reductase large subunit (1137 aa).

Residues 1-32 (MASRPAASSPVEARAPVGGQEAGGPSAATQGE) form a disordered region. The RIP homotypic interaction motif (RHIM) motif lies at 64–84 (SYRISDNNFVQCGSNCTMIID). 2 disordered regions span residues 124 to 159 (GGTP…FTLG) and 173 to 315 (AVFG…YPVP). Residues 131-141 (AGTSTGTQTAD) show a composition bias toward polar residues. Residues 196–206 (SDSDDSEDTDS) are compositionally biased toward acidic residues. Residues 281–290 (AGAGLAADPA) are compositionally biased toward low complexity. A compositionally biased stretch (basic and acidic residues) spans 291 to 304 (VARDDAEGLSDPRP). Substrate-binding positions include T566, 581–582 (SC), G612, 791–795 (NLCTE), and 968–972 (PTAAS). A disulfide bond links C582 and C808. N791 (proton acceptor) is an active-site residue. C793 acts as the Cysteine radical intermediate in catalysis. E795 (proton acceptor) is an active-site residue.

The protein belongs to the ribonucleoside diphosphate reductase large chain family. In terms of assembly, heterotetramer composed of a homodimer of the large subunit (R1) and a homodimer of the small subunit (R2). Larger multisubunit protein complex are also active, composed of (R1)n(R2)n. Self-assembles (via RIP homotypic interaction motif/RHIM) into homomeric fibrillar amyloid structures. Interacts (via RHIM) with human RIPK1 (via RHIM). Interacts (via RHIM) with human RIPK3 (via RHIM); the interaction leads to heteromeric amyloid assemblies. Interacts (via RHIM) with human ZBP1 (via RHIM); the interaction leads to heteromeric amyloid assemblies. Interacts (via C-terminus) with host CASP8.

The enzyme catalyses a 2'-deoxyribonucleoside 5'-diphosphate + [thioredoxin]-disulfide + H2O = a ribonucleoside 5'-diphosphate + [thioredoxin]-dithiol. Its function is as follows. Ribonucleoside-diphosphate reductase holoenzyme that provides the precursors necessary for viral DNA synthesis. Allows virus growth in non-dividing cells, as well as reactivation from latency in infected hosts. Catalyzes the biosynthesis of deoxyribonucleotides from the corresponding ribonucleotides. Prevents host necroptosis by targeting host RIPK1 and RIPK3, thereby hampering the formation of necroptotic RIPK1-RIPK3 complexes. Forms hetero-amyloid structures with host proteins RIPK3 or ZBP1 which may prevent RIPK3- and ZBP1-mediated necroptosis. In addition, inhibits extrinsic apoptosis by targeting host CASP8. The polypeptide is Ribonucleoside-diphosphate reductase large subunit (Human herpesvirus 1 (strain 17) (HHV-1)).